We begin with the raw amino-acid sequence, 126 residues long: RIFQICELSRVLKENGLGGFHGVSLEEWLCVIFHESGYDSQALNYYNGSSSHGLFQINQPYWCDDXDSESTEPSVNACQIPCSKLLDDDILDDIECAKKIVKEPKGITAWEAWQPFCNSDLDQWKC.

One can recognise a C-type lysozyme domain in the interval 1–126 (RIFQICELSR…CNSDLDQWKC (126 aa)). Disulfide bonds link Cys-6–Cys-126, Cys-30–Cys-117, Cys-63–Cys-82, and Cys-78–Cys-96. A glycan (N-linked (GlcNAc...) asparagine) is linked at Asn-47. Lys-84, Asp-87, Asp-89, Asp-92, and Asp-93 together coordinate Ca(2+).

It belongs to the glycosyl hydrolase 22 family. Lactose synthase (LS) is a heterodimer of a catalytic component, beta1,4-galactosyltransferase (beta4Gal-T1) and a regulatory component, alpha-lactalbumin (LA). In terms of tissue distribution, mammary gland specific. Secreted in milk.

The protein localises to the secreted. Functionally, regulatory subunit of lactose synthase, changes the substrate specificity of galactosyltransferase in the mammary gland making glucose a good acceptor substrate for this enzyme. This enables LS to synthesize lactose, the major carbohydrate component of milk. In other tissues, galactosyltransferase transfers galactose onto the N-acetylglucosamine of the oligosaccharide chains in glycoproteins. In Ornithorhynchus anatinus (Duckbill platypus), this protein is Alpha-lactalbumin (LALBA).